Here is a 215-residue protein sequence, read N- to C-terminus: Urease accessory protein UreG (215 aa).

24-31 is a binding site for GTP; the sequence is GPVGSGKT.

Belongs to the SIMIBI class G3E GTPase family. UreG subfamily. In terms of assembly, homodimer. UreD, UreF and UreG form a complex that acts as a GTP-hydrolysis-dependent molecular chaperone, activating the urease apoprotein by helping to assemble the nickel containing metallocenter of UreC. The UreE protein probably delivers the nickel.

The protein localises to the cytoplasm. Facilitates the functional incorporation of the urease nickel metallocenter. This process requires GTP hydrolysis, probably effectuated by UreG. The chain is Urease accessory protein UreG from Burkholderia cenocepacia (strain HI2424).